Reading from the N-terminus, the 87-residue chain is Glutaredoxin 1 (87 aa).

One can recognise a Glutaredoxin domain in the interval 1-87; sequence MFTVIFGRPG…WAKENLNLFA (87 aa). A disulfide bond links cysteine 11 and cysteine 14.

Belongs to the glutaredoxin family. In terms of assembly, monomer.

The disulfide bond functions as an electron carrier in the glutathione-dependent synthesis of deoxyribonucleotides by the enzyme ribonucleotide reductase. In addition, it is also involved in reducing some disulfides in a coupled system with glutathione reductase. The protein is Glutaredoxin 1 (grxA) of Salmonella typhi.